The following is a 155-amino-acid chain: Ribosomal RNA large subunit methyltransferase H (155 aa).

Residues Leu73, Gly104, and 123 to 128 contribute to the S-adenosyl-L-methionine site; that span reads LSPLTL.

It belongs to the RNA methyltransferase RlmH family. As to quaternary structure, homodimer.

It is found in the cytoplasm. The enzyme catalyses pseudouridine(1915) in 23S rRNA + S-adenosyl-L-methionine = N(3)-methylpseudouridine(1915) in 23S rRNA + S-adenosyl-L-homocysteine + H(+). Specifically methylates the pseudouridine at position 1915 (m3Psi1915) in 23S rRNA. The chain is Ribosomal RNA large subunit methyltransferase H from Stutzerimonas stutzeri (strain A1501) (Pseudomonas stutzeri).